A 245-amino-acid polypeptide reads, in one-letter code: Fibroblast growth factor 13 (245 aa).

Disordered stretches follow at residues 1-37 (MAAA…SKGN) and 213-245 (TEFS…NDST). Residues 1–62 (MAAAIASSLI…GSKKRRRRRP (62 aa)) are mediates targeting to the nucleus. Over residues 215 to 245 (FSRSGSGTPTKSRSVSGVLNGGKSMSQNDST) the composition is skewed to polar residues.

It belongs to the heparin-binding growth factors family.

It is found in the cell projection. Its subcellular location is the filopodium. The protein resides in the growth cone. It localises to the dendrite. The protein localises to the cell membrane. It is found in the sarcolemma. Its subcellular location is the cytoplasm. Functionally, microtubule-binding protein which directly binds tubulin and is involved in both polymerization and stabilization of microtubules. Through its action on microtubules, may participate in the refinement of axons by negatively regulating axonal and leading processes branching. Plays a crucial role in neuron polarization and migration. Regulates voltage-gated sodium channel transport and function. Required for proper head development, it is involved in neural differentiation through regulation of the mek5-erk5 pathway. This chain is Fibroblast growth factor 13 (fgf13), found in Xenopus laevis (African clawed frog).